The primary structure comprises 218 residues: MPVTLGYWDIRGLGHAIRLLLEYTETGYEEKRYAMGDAPDYDRSQWLNDKFKLDLDFPNLPYLIDGSHKVTQSNAILRYLGRKHNLCGETEEERIRVDILEKQVMDTRIQMGMLCYSADFEKRKPEFLKGLPDQLKLYSEFLGKQPWFAGDKITFADFLVYDVLDQHRMFEPTCLDAFPNLKDFMARFEGLRKISAYMKTSRFLPSPVYLKQATWGNE.

Residues 1 to 88 (MPVTLGYWDI…YLGRKHNLCG (88 aa)) enclose the GST N-terminal domain. Glutathione-binding positions include 7–8 (YW), 46–50 (WLNDK), 59–60 (NL), and 72–73 (QS). Positions 90–208 (TEEERIRVDI…KTSRFLPSPV (119 aa)) constitute a GST C-terminal domain. Y116 serves as a coordination point for substrate.

It belongs to the GST superfamily. Mu family. As to quaternary structure, homodimer. As to expression, expressed in liver, stomach and small intestine. Not expressed in spleen, kidney, colon, heart, muscle, brain or lung.

It localises to the cytoplasm. It carries out the reaction RX + glutathione = an S-substituted glutathione + a halide anion + H(+). Conjugation of reduced glutathione to a wide number of exogenous and endogenous hydrophobic electrophiles. This Mus musculus (Mouse) protein is Glutathione S-transferase Mu 6 (Gstm6).